Reading from the N-terminus, the 425-residue chain is Glutamate-1-semialdehyde 2,1-aminomutase (425 aa).

The residue at position 264 (lysine 264) is an N6-(pyridoxal phosphate)lysine.

This sequence belongs to the class-III pyridoxal-phosphate-dependent aminotransferase family. HemL subfamily. In terms of assembly, homodimer. Pyridoxal 5'-phosphate is required as a cofactor.

The protein localises to the cytoplasm. The enzyme catalyses (S)-4-amino-5-oxopentanoate = 5-aminolevulinate. It functions in the pathway porphyrin-containing compound metabolism; protoporphyrin-IX biosynthesis; 5-aminolevulinate from L-glutamyl-tRNA(Glu): step 2/2. The sequence is that of Glutamate-1-semialdehyde 2,1-aminomutase from Campylobacter lari (strain RM2100 / D67 / ATCC BAA-1060).